Consider the following 131-residue polypeptide: Profilin-4 (131 aa).

The cysteines at positions 13 and 115 are disulfide-linked. An Involved in PIP2 interaction motif is present at residues 81 to 97 (AVIRGKKGAGGITVKKT). A Phosphothreonine modification is found at T111.

The protein belongs to the profilin family. In terms of assembly, occurs in many kinds of cells as a complex with monomeric actin in a 1:1 ratio. In terms of processing, phosphorylated by MAP kinases.

The protein resides in the cytoplasm. Its subcellular location is the cytoskeleton. Its function is as follows. Binds to actin and affects the structure of the cytoskeleton. At high concentrations, profilin prevents the polymerization of actin, whereas it enhances it at low concentrations. In Olea europaea (Common olive), this protein is Profilin-4.